Here is a 350-residue protein sequence, read N- to C-terminus: Bifunctional methylenetetrahydrofolate dehydrogenase/cyclohydrolase, mitochondrial (350 aa).

Residues 1–35 (MAATSLMSALAARLLQPAHSCSLRLRPFHLAAVRN) constitute a mitochondrion transit peptide. Lysine 50 carries the N6-acetyllysine; alternate modification. Lysine 50 participates in a covalent cross-link: Glycyl lysine isopeptide (Lys-Gly) (interchain with G-Cter in SUMO2); alternate. Residues 84-88 (YVLNK) and 131-133 (VQL) contribute to the substrate site. NAD(+) is bound by residues 200-202 (GRS) and arginine 233. 309-313 (PGGVG) is a binding site for substrate.

This sequence belongs to the tetrahydrofolate dehydrogenase/cyclohydrolase family. As to quaternary structure, homodimer. Mg(2+) is required as a cofactor.

It localises to the mitochondrion. The enzyme catalyses (6R)-5,10-methylene-5,6,7,8-tetrahydrofolate + NAD(+) = (6R)-5,10-methenyltetrahydrofolate + NADH. It carries out the reaction (6R)-5,10-methenyltetrahydrofolate + H2O = (6R)-10-formyltetrahydrofolate + H(+). Although its dehydrogenase activity is NAD-specific, it can also utilize NADP at a reduced efficiency. The chain is Bifunctional methylenetetrahydrofolate dehydrogenase/cyclohydrolase, mitochondrial (MTHFD2) from Homo sapiens (Human).